We begin with the raw amino-acid sequence, 274 residues long: Thiazole synthase (274 aa).

Residue Lys115 is the Schiff-base intermediate with DXP of the active site. 1-deoxy-D-xylulose 5-phosphate-binding positions include Gly176, 202 to 203 (AG), and 224 to 225 (NS).

The protein belongs to the ThiG family. As to quaternary structure, homotetramer. Forms heterodimers with either ThiH or ThiS.

It localises to the cytoplasm. It catalyses the reaction [ThiS sulfur-carrier protein]-C-terminal-Gly-aminoethanethioate + 2-iminoacetate + 1-deoxy-D-xylulose 5-phosphate = [ThiS sulfur-carrier protein]-C-terminal Gly-Gly + 2-[(2R,5Z)-2-carboxy-4-methylthiazol-5(2H)-ylidene]ethyl phosphate + 2 H2O + H(+). Its pathway is cofactor biosynthesis; thiamine diphosphate biosynthesis. In terms of biological role, catalyzes the rearrangement of 1-deoxy-D-xylulose 5-phosphate (DXP) to produce the thiazole phosphate moiety of thiamine. Sulfur is provided by the thiocarboxylate moiety of the carrier protein ThiS. In vitro, sulfur can be provided by H(2)S. The protein is Thiazole synthase of Parasynechococcus marenigrum (strain WH8102).